Here is a 187-residue protein sequence, read N- to C-terminus: Elongation factor P (187 aa).

This sequence belongs to the elongation factor P family.

Its subcellular location is the cytoplasm. It participates in protein biosynthesis; polypeptide chain elongation. Its function is as follows. Involved in peptide bond synthesis. Stimulates efficient translation and peptide-bond synthesis on native or reconstituted 70S ribosomes in vitro. Probably functions indirectly by altering the affinity of the ribosome for aminoacyl-tRNA, thus increasing their reactivity as acceptors for peptidyl transferase. The chain is Elongation factor P from Desulfotalea psychrophila (strain LSv54 / DSM 12343).